A 454-amino-acid chain; its full sequence is 3-phosphoshikimate 1-carboxyvinyltransferase (454 aa).

3-phosphoshikimate is bound by residues Lys39, Ser40, and Arg44. Lys39 serves as a coordination point for phosphoenolpyruvate. Positions 112 and 140 each coordinate phosphoenolpyruvate. The 3-phosphoshikimate site is built by Ser185, Gln187, Asp333, and Lys360. Gln187 contributes to the phosphoenolpyruvate binding site. Asp333 functions as the Proton acceptor in the catalytic mechanism. Phosphoenolpyruvate is bound by residues Arg364 and Arg405.

The protein belongs to the EPSP synthase family. Monomer.

The protein localises to the cytoplasm. It catalyses the reaction 3-phosphoshikimate + phosphoenolpyruvate = 5-O-(1-carboxyvinyl)-3-phosphoshikimate + phosphate. It functions in the pathway metabolic intermediate biosynthesis; chorismate biosynthesis; chorismate from D-erythrose 4-phosphate and phosphoenolpyruvate: step 6/7. Its function is as follows. Catalyzes the transfer of the enolpyruvyl moiety of phosphoenolpyruvate (PEP) to the 5-hydroxyl of shikimate-3-phosphate (S3P) to produce enolpyruvyl shikimate-3-phosphate and inorganic phosphate. This Xylella fastidiosa (strain Temecula1 / ATCC 700964) protein is 3-phosphoshikimate 1-carboxyvinyltransferase.